The following is a 439-amino-acid chain: Ornithine aminotransferase, mitochondrial (439 aa).

Residues 1–25 (MLSKLARLQTVAGLGLGVHSSVASA) constitute a mitochondrion transit peptide. Residues K49 and K66 each carry the N6-acetyllysine modification. K102 is modified (N6-succinyllysine). K107 is modified (N6-acetyllysine; alternate). Position 107 is an N6-succinyllysine; alternate (K107). At K292 the chain carries N6-(pyridoxal phosphate)lysine. K362 carries the N6-acetyllysine; alternate modification. K362 is modified (N6-succinyllysine; alternate). K386 and K392 each carry N6-acetyllysine. K405 is subject to N6-acetyllysine; alternate. K405 carries the post-translational modification N6-succinyllysine; alternate. K421 bears the N6-acetyllysine mark.

It belongs to the class-III pyridoxal-phosphate-dependent aminotransferase family. In terms of assembly, homohexamer. Requires pyridoxal 5'-phosphate as cofactor.

The protein resides in the mitochondrion matrix. The catalysed reaction is L-ornithine + 2-oxoglutarate = L-glutamate 5-semialdehyde + L-glutamate. It functions in the pathway amino-acid biosynthesis; L-proline biosynthesis; L-glutamate 5-semialdehyde from L-ornithine: step 1/1. Its function is as follows. Catalyzes the reversible interconversion of L-ornithine and 2-oxoglutarate to L-glutamate semialdehyde and L-glutamate. In Bos taurus (Bovine), this protein is Ornithine aminotransferase, mitochondrial (OAT).